We begin with the raw amino-acid sequence, 250 residues long: Thermostable monoacylglycerol lipase (250 aa).

F29 is a substrate binding site. The active-site Nucleophile is the S97. M98 is a substrate binding site. Residues D196 and H226 each act as charge relay system in the active site.

It belongs to the lipase/esterase LIP3/BchO family. Monomer.

The enzyme catalyses Hydrolyzes glycerol monoesters of long-chain fatty acids.. With respect to regulation, not inhibited by cholate, but slightly inhibited by triton X-100 and deoxycholate. Completely inhibited by PMSF (phenylmethylsulfonyl fluoride) at a concentration of 200 uM. Functionally, hydrolyzes monoacylglycerols, with the highest activity occurring with 1-monolauroylglycerol. The polypeptide is Thermostable monoacylglycerol lipase (Bacillus sp. (strain H-257)).